Here is a 653-residue protein sequence, read N- to C-terminus: Multidomain regulatory protein MT1410 (653 aa).

Residues 86–142 (SGSEWRLQTDYDGSGVEERYFDFVVTPRRRADGSIEGVQLIVDDVTSRVRARQAAEA) form the PAC domain. A PPM-type phosphatase domain is found at 177–396 (DIAAEYLVAA…DDVTLLAMQR (220 aa)). Mn(2+) is bound by residues Asp-211, Val-212, Asp-328, and Asp-387. Positions 397–544 (RAPTPPLHIT…TMVRRAAFQQ (148 aa)) are anti-sigma factor kinase region. An STAS domain is found at 546–653 (IDSEFVSLVE…ADTEDIFAQE (108 aa)). Ser-600 carries the phosphoserine modification.

It depends on Mg(2+) as a cofactor. Mn(2+) is required as a cofactor. Post-translationally, autophosphorylated.

It carries out the reaction O-phospho-L-seryl-[protein] + H2O = L-seryl-[protein] + phosphate. The enzyme catalyses O-phospho-L-threonyl-[protein] + H2O = L-threonyl-[protein] + phosphate. It catalyses the reaction L-seryl-[protein] + ATP = O-phospho-L-seryl-[protein] + ADP + H(+). The catalysed reaction is L-threonyl-[protein] + ATP = O-phospho-L-threonyl-[protein] + ADP + H(+). In terms of biological role, primarily acts as an independent SigF regulator that is sensitive to the osmosensory signal, mediating the cross talk of PknD with the SigF regulon. Possesses both phosphatase and kinase activities. The kinase domain functions as a classic anti-sigma factor-like kinase to phosphorylate the anti-anti-sigma factor domain at the canonical regulatory site, and the phosphatase domain antagonizes this activity. This is Multidomain regulatory protein MT1410 from Mycobacterium tuberculosis (strain CDC 1551 / Oshkosh).